The following is a 185-amino-acid chain: Peptidyl-tRNA hydrolase (185 aa).

Tyr14 provides a ligand contact to tRNA. His19 serves as the catalytic Proton acceptor. TRNA contacts are provided by Tyr65, Asn67, and Asn113.

Belongs to the PTH family. Monomer.

Its subcellular location is the cytoplasm. It catalyses the reaction an N-acyl-L-alpha-aminoacyl-tRNA + H2O = an N-acyl-L-amino acid + a tRNA + H(+). Hydrolyzes ribosome-free peptidyl-tRNAs (with 1 or more amino acids incorporated), which drop off the ribosome during protein synthesis, or as a result of ribosome stalling. Its function is as follows. Catalyzes the release of premature peptidyl moieties from peptidyl-tRNA molecules trapped in stalled 50S ribosomal subunits, and thus maintains levels of free tRNAs and 50S ribosomes. This Rickettsia prowazekii (strain Madrid E) protein is Peptidyl-tRNA hydrolase.